A 245-amino-acid polypeptide reads, in one-letter code: Probable phosphatase KPN78578_10290 (245 aa).

H7, H9, H15, H40, E73, H101, H131, D192, and H194 together coordinate Zn(2+).

The protein belongs to the PHP family. Homotrimer. Zn(2+) serves as cofactor.

The sequence is that of Probable phosphatase KPN78578_10290 from Klebsiella pneumoniae subsp. pneumoniae (strain ATCC 700721 / MGH 78578).